The sequence spans 272 residues: Shikimate dehydrogenase (NADP(+)) (272 aa).

Shikimate contacts are provided by residues 14-16 (SKS) and Thr-61. Lys-65 functions as the Proton acceptor in the catalytic mechanism. Residue Glu-77 participates in NADP(+) binding. Residues Asn-86 and Asp-102 each contribute to the shikimate site. Residues 126–130 (GAGGA), 149–154 (NRTASR), and Met-213 contribute to the NADP(+) site. Shikimate is bound at residue Tyr-215. Residue Gly-237 coordinates NADP(+).

Belongs to the shikimate dehydrogenase family. As to quaternary structure, homodimer.

The catalysed reaction is shikimate + NADP(+) = 3-dehydroshikimate + NADPH + H(+). The protein operates within metabolic intermediate biosynthesis; chorismate biosynthesis; chorismate from D-erythrose 4-phosphate and phosphoenolpyruvate: step 4/7. In terms of biological role, involved in the biosynthesis of the chorismate, which leads to the biosynthesis of aromatic amino acids. Catalyzes the reversible NADPH linked reduction of 3-dehydroshikimate (DHSA) to yield shikimate (SA). The sequence is that of Shikimate dehydrogenase (NADP(+)) from Salmonella typhimurium (strain LT2 / SGSC1412 / ATCC 700720).